The sequence spans 254 residues: Receptor expression-enhancing protein 2 (254 aa).

2 helical membrane-spanning segments follow: residues 1–21 (MVSW…YPAY) and 35–55 (YVKW…ETLT). Ser152 bears the Phosphoserine mark. The disordered stretch occupies residues 164 to 254 (ALPLQGPDGR…KKTSAGGDSA (91 aa)). Positions 195–204 (SVRSGTNQAD) are enriched in polar residues. Residues 205–219 (PRTEISEDDTGDKAP) are compositionally biased toward basic and acidic residues.

It belongs to the DP1 family. As to quaternary structure, interacts with odorant receptor proteins.

It localises to the membrane. In terms of biological role, required for endoplasmic reticulum (ER) network formation, shaping and remodeling. May enhance the cell surface expression of odorant receptors. The protein is Receptor expression-enhancing protein 2 (REEP2) of Bos taurus (Bovine).